Consider the following 145-residue polypeptide: Mitochondrial import receptor subunit TOM20 homolog (145 aa).

The Mitochondrial intermembrane portion of the chain corresponds to 1 to 6 (MVGRNS). A helical transmembrane segment spans residues 7–24 (AIAAGVCGALFIGYCIYF). Over 25-145 (DRKRRSDPNF…AQSLAEDDVE (121 aa)) the chain is Cytoplasmic. Glycyl lysine isopeptide (Lys-Gly) (interchain with G-Cter in ubiquitin) cross-links involve residues lysine 35, lysine 56, lysine 61, and lysine 68. Phosphoserine is present on residues serine 135 and serine 138.

This sequence belongs to the Tom20 family. As to quaternary structure, forms part of the preprotein translocase complex of the outer mitochondrial membrane (TOM complex) which consists of at least 7 different proteins (TOMM5, TOMM6, TOMM7, TOMM20, TOMM22, TOMM40 and TOMM70). Interacts with TOM22. Interacts with APEX1. Interacts with TBC1D21. Upon mitochondrial depolarization, interacts with PINK1; the interaction is required for PINK1-TOM-TIM23 supercomplex formation which is critical for PINK1 stabilization at the outer mitochondrial membrane, kinase activation and downstream mitophagy. Post-translationally, ubiquitinated by PRKN during mitophagy, leading to its degradation and enhancement of mitophagy. Deubiquitinated by USP30.

The protein resides in the mitochondrion outer membrane. Its function is as follows. Central component of the receptor complex responsible for the recognition and translocation of cytosolically synthesized mitochondrial preproteins. Together with TOM22 functions as the transit peptide receptor at the surface of the mitochondrion outer membrane and facilitates the movement of preproteins into the TOM40 translocation pore. Required for the translocation across the mitochondrial outer membrane of cytochrome P450 monooxygenases. This chain is Mitochondrial import receptor subunit TOM20 homolog (TOMM20), found in Bos taurus (Bovine).